Consider the following 503-residue polypeptide: Phenylalanine--tRNA ligase alpha subunit (503 aa).

An N-acetylserine modification is found at S2. A contains the major tRNA-Phe binding sites region spans residues 2-173 (SDFQLEILKK…KRKLIAQGKI (172 aa)). L-phenylalanine contacts are provided by residues T333, 374–376 (QVE), and Y414. E416 is a binding site for Mg(2+). F440 serves as a coordination point for L-phenylalanine.

The protein belongs to the class-II aminoacyl-tRNA synthetase family. Phe-tRNA synthetase alpha subunit type 2 subfamily. As to quaternary structure, tetramer of two alpha and two beta subunits. Mg(2+) is required as a cofactor.

It localises to the cytoplasm. It carries out the reaction tRNA(Phe) + L-phenylalanine + ATP = L-phenylalanyl-tRNA(Phe) + AMP + diphosphate + H(+). This Saccharomyces cerevisiae (strain ATCC 204508 / S288c) (Baker's yeast) protein is Phenylalanine--tRNA ligase alpha subunit (FRS2).